Here is a 245-residue protein sequence, read N- to C-terminus: Pyridoxine 5'-phosphate synthase (245 aa).

Asparagine 7 provides a ligand contact to 3-amino-2-oxopropyl phosphate. Residue aspartate 9–histidine 10 participates in 1-deoxy-D-xylulose 5-phosphate binding. Residue arginine 18 coordinates 3-amino-2-oxopropyl phosphate. Histidine 43 (proton acceptor) is an active-site residue. 1-deoxy-D-xylulose 5-phosphate contacts are provided by arginine 45 and histidine 50. The active-site Proton acceptor is the glutamate 70. Threonine 100 is a binding site for 1-deoxy-D-xylulose 5-phosphate. Histidine 190 (proton donor) is an active-site residue. 3-amino-2-oxopropyl phosphate-binding positions include glycine 191 and glycine 212–histidine 213.

It belongs to the PNP synthase family. As to quaternary structure, homooctamer; tetramer of dimers.

It localises to the cytoplasm. It catalyses the reaction 3-amino-2-oxopropyl phosphate + 1-deoxy-D-xylulose 5-phosphate = pyridoxine 5'-phosphate + phosphate + 2 H2O + H(+). It participates in cofactor biosynthesis; pyridoxine 5'-phosphate biosynthesis; pyridoxine 5'-phosphate from D-erythrose 4-phosphate: step 5/5. Catalyzes the complicated ring closure reaction between the two acyclic compounds 1-deoxy-D-xylulose-5-phosphate (DXP) and 3-amino-2-oxopropyl phosphate (1-amino-acetone-3-phosphate or AAP) to form pyridoxine 5'-phosphate (PNP) and inorganic phosphate. This chain is Pyridoxine 5'-phosphate synthase, found in Prochlorococcus marinus (strain NATL1A).